Reading from the N-terminus, the 407-residue chain is 4-hydroxy-3-methylbut-2-en-1-yl diphosphate synthase (ferredoxin) (407 aa).

Positions 316, 319, 350, and 357 each coordinate [4Fe-4S] cluster.

This sequence belongs to the IspG family. Requires [4Fe-4S] cluster as cofactor.

The catalysed reaction is (2E)-4-hydroxy-3-methylbut-2-enyl diphosphate + 2 oxidized [2Fe-2S]-[ferredoxin] + H2O = 2-C-methyl-D-erythritol 2,4-cyclic diphosphate + 2 reduced [2Fe-2S]-[ferredoxin] + H(+). Its pathway is isoprenoid biosynthesis; isopentenyl diphosphate biosynthesis via DXP pathway; isopentenyl diphosphate from 1-deoxy-D-xylulose 5-phosphate: step 5/6. Its function is as follows. Converts 2C-methyl-D-erythritol 2,4-cyclodiphosphate (ME-2,4cPP) into 1-hydroxy-2-methyl-2-(E)-butenyl 4-diphosphate. In Prochlorococcus marinus (strain SARG / CCMP1375 / SS120), this protein is 4-hydroxy-3-methylbut-2-en-1-yl diphosphate synthase (ferredoxin).